A 452-amino-acid polypeptide reads, in one-letter code: Phosphatidate cytidylyltransferase, mitochondrial (452 aa).

This sequence belongs to the TAM41 family. It depends on Mg(2+) as a cofactor.

Its subcellular location is the mitochondrion inner membrane. The enzyme catalyses a 1,2-diacyl-sn-glycero-3-phosphate + CTP + H(+) = a CDP-1,2-diacyl-sn-glycerol + diphosphate. It functions in the pathway phospholipid metabolism; CDP-diacylglycerol biosynthesis; CDP-diacylglycerol from sn-glycerol 3-phosphate: step 3/3. Catalyzes the conversion of phosphatidic acid (PA) to CDP-diacylglycerol (CDP-DAG), an essential intermediate in the synthesis of phosphatidylglycerol, cardiolipin and phosphatidylinositol. In Homo sapiens (Human), this protein is Phosphatidate cytidylyltransferase, mitochondrial (TAMM41).